The primary structure comprises 233 residues: Ribosomal RNA-processing protein 14-C (233 aa).

Positions 32-65 (DRALLLQRRKEKAKARAEAKKLAKKESKAKQESK) form a coiled coil. Over residues 47 to 64 (RAEAKKLAKKESKAKQES) the composition is skewed to basic and acidic residues. Disordered stretches follow at residues 47 to 87 (RAEA…DNHK), 130 to 149 (KRRI…ESDK), and 164 to 233 (DNEQ…SKKK). At Ser-75 the chain carries Phosphoserine. A coiled-coil region spans residues 122–223 (ALKHLEAKKR…ESKKSKKGKA (102 aa)). 2 stretches are compositionally biased toward basic and acidic residues: residues 133–149 (IESM…ESDK) and 180–209 (KKKS…EENL). The segment covering 210–233 (KKRRESKKSKKGKAPKKKKPSKKK) has biased composition (basic residues).

It belongs to the SURF6 family. Component of the 90S and 60S pre-ribosomal particles.

It localises to the nucleus. The protein localises to the nucleolus. In terms of biological role, involved in ribosome biogenesis and cell polarity. Required for the synthesis of both 40S and 60S ribosomal subunits and may also play some direct role in correct positioning of the mitotic spindle during mitosis. The chain is Ribosomal RNA-processing protein 14-C (rrp14c) from Schizosaccharomyces pombe (strain 972 / ATCC 24843) (Fission yeast).